Here is an 84-residue protein sequence, read N- to C-terminus: Small ribosomal subunit protein bS20 (84 aa).

This sequence belongs to the bacterial ribosomal protein bS20 family.

Functionally, binds directly to 16S ribosomal RNA. The protein is Small ribosomal subunit protein bS20 of Bacteroides thetaiotaomicron (strain ATCC 29148 / DSM 2079 / JCM 5827 / CCUG 10774 / NCTC 10582 / VPI-5482 / E50).